Here is a 387-residue protein sequence, read N- to C-terminus: Probable aminomethyltransferase, mitochondrial (387 aa).

E219, R248, and Y385 together coordinate substrate.

The protein belongs to the GcvT family. As to quaternary structure, the glycine cleavage system is composed of four proteins: P, T, L and H.

The protein resides in the mitochondrion. It catalyses the reaction N(6)-[(R)-S(8)-aminomethyldihydrolipoyl]-L-lysyl-[protein] + (6S)-5,6,7,8-tetrahydrofolate = N(6)-[(R)-dihydrolipoyl]-L-lysyl-[protein] + (6R)-5,10-methylene-5,6,7,8-tetrahydrofolate + NH4(+). The glycine cleavage system catalyzes the degradation of glycine. This Schizosaccharomyces pombe (strain 972 / ATCC 24843) (Fission yeast) protein is Probable aminomethyltransferase, mitochondrial (gcv1).